The primary structure comprises 589 residues: uncharacterized protein (589 aa).

5 helical membrane passes run Leu11–Ala31, Leu57–Leu77, Phe97–Ala117, Ile190–Ile210, and Gly213–Gly233. Residues Leu57–Leu357 enclose the ABC transmembrane type-1 domain. An ABC transporter domain is found at Val390–Cys587. Gly423–Thr430 lines the ATP pocket.

This sequence belongs to the ABC transporter superfamily.

It localises to the cell inner membrane. This is an uncharacterized protein from Haemophilus influenzae (strain ATCC 51907 / DSM 11121 / KW20 / Rd).